A 49-amino-acid chain; its full sequence is Large ribosomal subunit protein bL33A (49 aa).

Belongs to the bacterial ribosomal protein bL33 family.

The sequence is that of Large ribosomal subunit protein bL33A from Limosilactobacillus reuteri subsp. reuteri (strain JCM 1112) (Lactobacillus reuteri).